The following is a 483-amino-acid chain: Uroporphyrinogen-III C-methyltransferase (483 aa).

Belongs to the precorrin methyltransferase family.

It catalyses the reaction uroporphyrinogen III + 2 S-adenosyl-L-methionine = precorrin-2 + 2 S-adenosyl-L-homocysteine + H(+). The polypeptide is Uroporphyrinogen-III C-methyltransferase (nasF) (Bacillus subtilis (strain 168)).